The sequence spans 104 residues: MAGRSGVNDEELLRAVRVIKILYQSNPYPNSKGTRQARRNRRRRWRARQRQIRAISERILSSCLGGPPEPVDLPLPPLDRLTLDTEEDSGTPGTESQQGTATTE.

The residue at position 5 (Ser5) is a Phosphoserine; by host CK2. The homomultimerization stretch occupies residues 18 to 26 (VIKILYQSN). Positions 25–34 (SNPYPNSKGT) are enriched in polar residues. 2 disordered regions span residues 25 to 48 (SNPY…WRAR) and 63 to 104 (CLGG…ATTE). Residues 34-50 (TRQARRNRRRRWRARQR) carry the Nuclear localization signal and RNA-binding (RRE) motif. Residues 35–48 (RQARRNRRRRWRAR) show a composition bias toward basic residues. Pro residues predominate over residues 67-77 (PPEPVDLPLPP). The Nuclear export signal and binding to XPO1 signature appears at 73 to 84 (LPLPPLDRLTLD). Residues 91–104 (TPGTESQQGTATTE) are compositionally biased toward polar residues.

It belongs to the HIV-1 REV protein family. Homomultimer; when bound to the RRE. Multimeric assembly is essential for activity and may involve XPO1. Binds to human KPNB1, XPO1, TNPO1, RANBP5 and IPO7. Interacts with the viral Integrase. Interacts with human KHDRBS1. Interacts with human NAP1; this interaction decreases Rev multimerization and stimulates its activity. Interacts with human DEAD-box helicases DDX3 and DDX24; these interactions may serve for viral RNA export to the cytoplasm and packaging, respectively. Interacts with human PSIP1; this interaction may inhibit HIV-1 DNA integration by promoting dissociation of the Integrase-LEDGF/p75 complex. In terms of processing, asymmetrically arginine dimethylated at one site by host PRMT6. Methylation impairs the RNA-binding activity and export of viral RNA from the nucleus to the cytoplasm. Post-translationally, phosphorylated by protein kinase CK2. Presence of, and maybe binding to the N-terminus of the regulatory beta subunit of CK2 is necessary for CK2-mediated Rev's phosphorylation.

It localises to the host nucleus. Its subcellular location is the host nucleolus. The protein resides in the host cytoplasm. In terms of biological role, escorts unspliced or incompletely spliced viral pre-mRNAs (late transcripts) out of the nucleus of infected cells. These pre-mRNAs carry a recognition sequence called Rev responsive element (RRE) located in the env gene, that is not present in fully spliced viral mRNAs (early transcripts). This function is essential since most viral proteins are translated from unspliced or partially spliced pre-mRNAs which cannot exit the nucleus by the pathway used by fully processed cellular mRNAs. Rev itself is translated from a fully spliced mRNA that readily exits the nucleus. Rev's nuclear localization signal (NLS) binds directly to KPNB1/Importin beta-1 without previous binding to KPNA1/Importin alpha-1. KPNB1 binds to the GDP bound form of RAN (Ran-GDP) and targets Rev to the nucleus. In the nucleus, the conversion from Ran-GDP to Ran-GTP dissociates Rev from KPNB1 and allows Rev's binding to the RRE in viral pre-mRNAs. Rev multimerization on the RRE via cooperative assembly exposes its nuclear export signal (NES) to the surface. Rev can then form a complex with XPO1/CRM1 and Ran-GTP, leading to nuclear export of the complex. Conversion from Ran-GTP to Ran-GDP mediates dissociation of the Rev/RRE/XPO1/RAN complex, so that Rev can return to the nucleus for a subsequent round of export. Beside KPNB1, also seems to interact with TNPO1/Transportin-1, RANBP5/IPO5 and IPO7/RANBP7 for nuclear import. The nucleoporin-like HRB/RIP is an essential cofactor that probably indirectly interacts with Rev to release HIV RNAs from the perinuclear region to the cytoplasm. This chain is Protein Rev, found in Human immunodeficiency virus type 1 group N (isolate YBF30) (HIV-1).